The chain runs to 474 residues: Probable fucosyltransferase 9 (474 aa).

Residues 1–21 (MIKLTIAIATCLVLCLVLLLP) form a helical; Signal-anchor for type II membrane protein membrane-spanning segment. Over 22 to 474 (SSNISYRHKY…LKLVDVSDEL (453 aa)) the chain is Lumenal. N-linked (GlcNAc...) asparagine glycosylation is found at Asn-24, Asn-39, and Asn-208.

The protein belongs to the glycosyltransferase 37 family. Expressed in leaves and stems.

Its subcellular location is the golgi apparatus. It is found in the golgi stack membrane. It participates in protein modification; protein glycosylation. In terms of biological role, may be involved in cell wall biosynthesis. May act as a fucosyltransferase. The chain is Probable fucosyltransferase 9 (FUT9) from Arabidopsis thaliana (Mouse-ear cress).